The following is a 216-amino-acid chain: Heart- and neural crest derivatives-expressed protein 2 (216 aa).

The interval 74-115 is disordered; that stretch reads MDHSHYGGVPPGSGPPGLGGPRPVKRRGTANRKERRRTQSIN. Over residues 82–93 the composition is skewed to gly residues; that stretch reads VPPGSGPPGLGG. Positions 96-111 are enriched in basic residues; that stretch reads PVKRRGTANRKERRRT. A bHLH domain is found at 98-150; it reads KRRGTANRKERRRTQSINSAFAELRECIPNVPADTKLSKIKTLRLATSYIAYL.

As to quaternary structure, efficient DNA binding requires dimerization with another bHLH protein.

The protein localises to the nucleus. Its function is as follows. Essential for cardiac morphogenesis. Binds DNA on E-box consensus sequence 5'-CANNTG-3'. Plays an important role in limb development, particularly in the establishment of anterior-posterior polarization of the limb bud. In Gallus gallus (Chicken), this protein is Heart- and neural crest derivatives-expressed protein 2 (HAND2).